A 270-amino-acid chain; its full sequence is MAFAIASALTSTLTLSTSRVQNPTQRRPHVASTSSTGGRLMRERLVVVRAGKEVSSVCEPLPPDRPLWFPGSSPPEWLDGSLPGDFGFDPLGLGSDPDTLKWFAQAELIHSRWAMLAVTGIIIPECLERLGFIENFSWYDAGSREYFADSTTLFVAQMVLMGWAEGRRWADLIKPGSVDIEPKYPHKVNPKPDVGYPGGLWFDFMMWGRGSPEPVMVLRTKEIKNGRLAMLAFLGFCFQATYTSQDPIENLMAHLADPGHCNVFSAFTSH.

A chloroplast-targeting transit peptide spans methionine 1–threonine 33. Residues serine 16 to threonine 36 are disordered. Polar residues predominate over residues arginine 19 to threonine 36. Tryptophan 68 is a binding site for chlorophyll b. Residues phenylalanine 88 and glutamate 107 each coordinate chlorophyll a. Arginine 112 lines the chlorophyll b pocket. Residues tyrosine 146–alanine 164 traverse the membrane as a helical segment. 2 residues coordinate chlorophyll b: glutamate 165 and arginine 168. Lysine 221, glutamate 222, asparagine 225, arginine 227, glutamine 239, and histidine 254 together coordinate chlorophyll a. A helical transmembrane segment spans residues leucine 228–serine 244.

The protein belongs to the light-harvesting chlorophyll a/b-binding (LHC) protein family. The LHC complex consists of chlorophyll a-b binding proteins. Homodimer. Binds pigments. Element of the NAD(P)H dehydrogenase-photosystem I supercomplex (NDH-PSI). Requires Binds at least 14 chlorophylls (8 Chl-a and 6 Chl-b) and carotenoids such as lutein and neoxanthin. as cofactor. Post-translationally, photoregulated by reversible phosphorylation of its threonine residues.

It localises to the plastid. The protein resides in the chloroplast thylakoid membrane. Its function is as follows. The light-harvesting complex (LHC) functions as a light receptor, it captures and delivers excitation energy to photosystems with which it is closely associated. Seems involved in the function of the photosystem I in low light conditions, when other LHCA proteins are less abundant. Required, together with LHCA5, for the formation of a full-size NAD(P)H dehydrogenase-photosystem I supercomplex (NDH-PSI) that triggers cyclic and chlororespiratory electron transport in chloroplast thylakoids, especially under stress conditions (e.g. increased light intensity). The chain is Photosystem I chlorophyll a/b-binding protein 6, chloroplastic from Arabidopsis thaliana (Mouse-ear cress).